The chain runs to 1109 residues: Myosin ID heavy chain (1109 aa).

Positions 7–687 (HGVDDMVMLS…TVFNLEELRE (681 aa)) constitute a Myosin motor domain. 101–108 (GESGAGKT) contacts ATP. The tract at residues 564–586 (IGALVKALSACTPHYIRCIKPNG) is actin-binding. Residues 725–919 (KERRRLSIER…VSTPSDGLPA (195 aa)) form the TH1 domain. Residues 958–1017 (NVKPSAKALYDFDAESSMELSFKEGDILTVLDQSSGDWWDAELKGRRGKVPSNYLQLIKN) enclose the SH3 domain. Positions 1017–1109 (NAAPPRAGGP…APRGGMAPRV (93 aa)) are disordered. A compositionally biased stretch (low complexity) spans 1030–1043 (TGNRAPTTTTTSGG).

The protein belongs to the TRAFAC class myosin-kinesin ATPase superfamily. Myosin family. Myosin I heavy chain is single-headed. Dimer of a heavy and a light chain. Inability to self-assemble into filaments.

The protein resides in the cell projection. Its subcellular location is the pseudopodium. It localises to the cytoplasm. The protein localises to the cell cortex. Myosin is a protein that binds to actin and has ATPase activity that is activated by actin. Myosin id may have a role in chemotaxis and aggregation; it could serve to stabilize and even retract cortical structures, such as pseudopods and lamellopods. Involved in the process of phagocytosis. The sequence is that of Myosin ID heavy chain (myoD) from Dictyostelium discoideum (Social amoeba).